The following is a 245-amino-acid chain: TLC domain-containing protein 5 (245 aa).

6 helical membrane-spanning segments follow: residues 1–21, 38–58, 75–95, 99–119, 162–182, and 191–211; these read MAVG…SLYT, LVTF…GFID, VHVL…CIYF, GPLM…ALAL, FLFV…LLFC, and WFVK…MVSI. One can recognise a TLC domain in the interval 29–204; that stretch reads HRSCEWSCRL…VGGVAMYAVS (176 aa).

It belongs to the TLCD5 family.

The protein resides in the membrane. In Mus musculus (Mouse), this protein is TLC domain-containing protein 5 (Tlcd5).